Consider the following 192-residue polypeptide: HTH-type transcriptional repressor SCO4008 (192 aa).

An HTH tetR-type domain is found at 7–67 (EATKARIFEA…SVLEKKMLDL (61 aa)). A DNA-binding region (H-T-H motif) is located at residues 30 to 49 (RIDRIAAEARANKQLIYAYY).

In terms of assembly, homodimer. Four dimers bind to the two operator sites.

Binding of a wide range of cationic hydrophobic compounds to SCO4008 causes a decrease in DNA-binding, probably via allosteric conformational change of SCO4008. Probably regulates the expression of its own gene and the adjacent SCO4007 gene by binding to two operator sites in the SCO4007-SCO4008 intergenic region. The sequence is that of HTH-type transcriptional repressor SCO4008 from Streptomyces coelicolor (strain ATCC BAA-471 / A3(2) / M145).